The sequence spans 372 residues: Spermidine/putrescine import ATP-binding protein PotA (372 aa).

The ABC transporter domain maps to 12–250; the sequence is VSIRSVRKVY…PRNRFVADFI (239 aa). 48 to 55 is a binding site for ATP; that stretch reads GPSGCGKT.

It belongs to the ABC transporter superfamily. Spermidine/putrescine importer (TC 3.A.1.11.1) family. In terms of assembly, the complex is composed of two ATP-binding proteins (PotA), two transmembrane proteins (PotB and PotC) and a solute-binding protein (PotD).

It localises to the cell inner membrane. The catalysed reaction is ATP + H2O + polyamine-[polyamine-binding protein]Side 1 = ADP + phosphate + polyamineSide 2 + [polyamine-binding protein]Side 1.. In terms of biological role, part of the ABC transporter complex PotABCD involved in spermidine/putrescine import. Responsible for energy coupling to the transport system. This chain is Spermidine/putrescine import ATP-binding protein PotA, found in Pseudomonas fluorescens (strain ATCC BAA-477 / NRRL B-23932 / Pf-5).